Here is a 439-residue protein sequence, read N- to C-terminus: Enolase (439 aa).

Gln-163 contacts (2R)-2-phosphoglycerate. Glu-205 acts as the Proton donor in catalysis. Residues Asp-242, Glu-287, and Asp-314 each contribute to the Mg(2+) site. (2R)-2-phosphoglycerate contacts are provided by Lys-339, Arg-368, Ser-369, and Lys-390. Residue Lys-339 is the Proton acceptor of the active site.

Belongs to the enolase family. It depends on Mg(2+) as a cofactor.

It is found in the cytoplasm. The protein resides in the secreted. Its subcellular location is the cell surface. It carries out the reaction (2R)-2-phosphoglycerate = phosphoenolpyruvate + H2O. It participates in carbohydrate degradation; glycolysis; pyruvate from D-glyceraldehyde 3-phosphate: step 4/5. Its function is as follows. Catalyzes the reversible conversion of 2-phosphoglycerate (2-PG) into phosphoenolpyruvate (PEP). It is essential for the degradation of carbohydrates via glycolysis. In Levilactobacillus brevis (strain ATCC 367 / BCRC 12310 / CIP 105137 / JCM 1170 / LMG 11437 / NCIMB 947 / NCTC 947) (Lactobacillus brevis), this protein is Enolase.